Reading from the N-terminus, the 702-residue chain is Amino-acid racemase (702 aa).

Topologically, residues 1–12 (MKHRANGIDLFR) are cytoplasmic. Residues 13–33 (IFAATMVVAIHTFPFQSIAPF) form a helical membrane-spanning segment. The Extracellular segment spans residues 34–39 (LDEVIT). The chain crosses the membrane as a helical span at residues 40 to 60 (LTVFRVAVPFFFMITGYFLLG). Over 61-77 (RLSLNFSYNNNQRVKKY) the chain is Cytoplasmic. The helical transmembrane segment at 78-98 (LYKIGMIYLYSILLYFPLSLL) threads the bilayer. Residues 99–120 (NGTISLKMNILLLLKVFIFDGT) lie on the Extracellular side of the membrane. Residues 121-141 (FYHLWYFPASIIGTILVTLLL) form a helical membrane-spanning segment. A topological domain (cytoplasmic) is located at residue arginine 142. Residues 143-163 (SIGFKLTVAFSTCLYLVGLGG) traverse the membrane as a helical segment. At 164 to 191 (DSWYGITNQVPLLNKLYTFIFSWSDYTR) the chain is on the extracellular side. Residues 192–212 (SGVFFTPVFLCLGIFAYRVSK) form a helical membrane-spanning segment. The Cytoplasmic segment spans residues 213-218 (KLTASK). Residues 219–239 (ILNLLFYVFIIGMTFESIFLH) form a helical membrane-spanning segment. Over 240–248 (RFTNVKHDS) the chain is Extracellular. Residues 249–269 (MYLLLPSCALILFLMLLNWQP) form a helical membrane-spanning segment. The Cytoplasmic segment spans residues 270-276 (KLKVKES). A helical membrane pass occupies residues 277-297 (ADLTLLVYILHPLVIVIVHSI). Residues 298 to 307 (SKYIPILKNS) are Extracellular-facing. A helical membrane pass occupies residues 308 to 328 (LLNFLLVVVCSFILAQLLLNL). Residues 329 to 702 (KRKLRVSKQK…LGSRLGTELN (374 aa)) lie on the Cytoplasmic side of the membrane. The segment at 337–702 (QKIPFERASK…LGSRLGTELN (366 aa)) is racemase. Catalysis depends on lysine 375, which acts as the Proton acceptor. Lysine 375 carries the N6-(pyridoxal phosphate)lysine modification. Position 469 (arginine 469) interacts with substrate. The Proton acceptor role is filled by tyrosine 601. Substrate is bound at residue methionine 650.

It in the N-terminal section; belongs to the acyltransferase 3 family. The protein in the C-terminal section; belongs to the alanine racemase family. It depends on pyridoxal 5'-phosphate as a cofactor.

It localises to the cell membrane. In Enterococcus faecalis (Streptococcus faecalis), this protein is Amino-acid racemase (vanTE).